The primary structure comprises 254 residues: Adenosylcobinamide-GDP ribazoletransferase (254 aa).

Transmembrane regions (helical) follow at residues 27–47 (SSLY…VLFA), 50–70 (GMGA…GFIL), 104–124 (VGSF…ICLL), 131–151 (AYGM…LLAA), 170–190 (AGWP…FVLL), 194–214 (VVPS…VGWL), and 233–253 (LVEI…FSAI).

This sequence belongs to the CobS family. Requires Mg(2+) as cofactor.

The protein localises to the cell inner membrane. It carries out the reaction alpha-ribazole + adenosylcob(III)inamide-GDP = adenosylcob(III)alamin + GMP + H(+). It catalyses the reaction alpha-ribazole 5'-phosphate + adenosylcob(III)inamide-GDP = adenosylcob(III)alamin 5'-phosphate + GMP + H(+). Its pathway is cofactor biosynthesis; adenosylcobalamin biosynthesis; adenosylcobalamin from cob(II)yrinate a,c-diamide: step 7/7. Functionally, joins adenosylcobinamide-GDP and alpha-ribazole to generate adenosylcobalamin (Ado-cobalamin). Also synthesizes adenosylcobalamin 5'-phosphate from adenosylcobinamide-GDP and alpha-ribazole 5'-phosphate. This Chlorobaculum parvum (strain DSM 263 / NCIMB 8327) (Chlorobium vibrioforme subsp. thiosulfatophilum) protein is Adenosylcobinamide-GDP ribazoletransferase.